Reading from the N-terminus, the 97-residue chain is Small ribosomal subunit protein bS6 (97 aa).

It belongs to the bacterial ribosomal protein bS6 family.

In terms of biological role, binds together with bS18 to 16S ribosomal RNA. This Syntrophomonas wolfei subsp. wolfei (strain DSM 2245B / Goettingen) protein is Small ribosomal subunit protein bS6.